The chain runs to 265 residues: MALVSINQLPENILLEVFMHVPARQLLRNCRPVCCLWRDLIDLVSLWKRKCLREGYVTEDWDQPVSDWKVFYFLCSLRRNLLRNPCAEEDMKSWKIDSNGGDQWKVESLPGAHGTGFPDSKVKKYFVTSYDMCLKSQIIDLKAEGYWEELLDKFRPDIVVKDWFAPRADCGCTYQIRVQLASADYLVLASFEPPPVTIHQWNDAKWTEVSHTFSDYPPGVRHIFFQHGGKDTQFWAGWYGPRVTNSSVVISHRVTRNPPHAMAQP.

An F-box domain is found at 3 to 50 (LVSINQLPENILLEVFMHVPARQLLRNCRPVCCLWRDLIDLVSLWKRK). Residues 71–252 (FYFLCSLRRN…VTNSSVVISH (182 aa)) enclose the FBA domain. Ser251 is modified (phosphoserine).

In terms of assembly, part of a SCF (SKP1-cullin-F-box) protein ligase complex. Interacts with VCP, CHEK1 and CUL1.

Its subcellular location is the cytoplasm. It participates in protein modification; protein ubiquitination. Functionally, substrate-recognition component of some SCF (SKP1-CUL1-F-box protein)-type E3 ubiquitin ligase complexes. Involved in endoplasmic reticulum-associated degradation pathway (ERAD) for misfolded lumenal proteins by recognizing and binding sugar chains on unfolded glycoproteins that are retrotranslocated into the cytosol and promoting their ubiquitination and subsequent degradation. Able to recognize and bind denatured glycoproteins, which are modified with not only high-mannose but also complex-type oligosaccharides. Also recognizes sulfated glycans. Also involved in DNA damage response by specifically recognizing activated CHEK1 (phosphorylated on 'Ser-345'), promoting its ubiquitination and degradation. Ubiquitination of CHEK1 is required to ensure that activated CHEK1 does not accumulate as cells progress through S phase, or when replication forks encounter transient impediments during normal DNA replication. This is F-box only protein 6 (FBXO6) from Bos taurus (Bovine).